Here is a 152-residue protein sequence, read N- to C-terminus: Outer membrane protein assembly factor BamE (152 aa).

The N-terminal stretch at 1–32 is a signal peptide; that stretch reads MIDQNHDSEEQAQMQKLTRTVTLTVALTLVSG. A lipid anchor (N-palmitoyl cysteine) is attached at cysteine 33. Cysteine 33 is lipidated: S-diacylglycerol cysteine. The interval 114–152 is disordered; sequence IDRHGDFSRPPSVADERGIGPTDSTNARGNLLNARPDDE.

Belongs to the BamE family. As to quaternary structure, part of the Bam complex.

The protein localises to the cell outer membrane. Part of the outer membrane protein assembly complex, which is involved in assembly and insertion of beta-barrel proteins into the outer membrane. The polypeptide is Outer membrane protein assembly factor BamE (Halomonas elongata (strain ATCC 33173 / DSM 2581 / NBRC 15536 / NCIMB 2198 / 1H9)).